We begin with the raw amino-acid sequence, 528 residues long: Chaperonin GroEL, chloroplastic (528 aa).

ATP is bound by residues 29-32, 86-90, G415, 481-483, and D497; these read TLGP, DGTTT, and NAA.

This sequence belongs to the chaperonin (HSP60) family. In terms of assembly, forms a cylinder of 14 subunits composed of two heptameric rings stacked back-to-back. Interacts with the co-chaperonin GroES.

The protein localises to the plastid. It localises to the chloroplast. The enzyme catalyses ATP + H2O + a folded polypeptide = ADP + phosphate + an unfolded polypeptide.. Together with its co-chaperonin GroES, plays an essential role in assisting protein folding. The GroEL-GroES system forms a nano-cage that allows encapsulation of the non-native substrate proteins and provides a physical environment optimized to promote and accelerate protein folding. In Trieres chinensis (Marine centric diatom), this protein is Chaperonin GroEL, chloroplastic.